The sequence spans 457 residues: UDP-N-acetylmuramate--L-alanine ligase (457 aa).

112 to 118 (GAHGKTS) contributes to the ATP binding site.

This sequence belongs to the MurCDEF family.

It is found in the cytoplasm. It carries out the reaction UDP-N-acetyl-alpha-D-muramate + L-alanine + ATP = UDP-N-acetyl-alpha-D-muramoyl-L-alanine + ADP + phosphate + H(+). The protein operates within cell wall biogenesis; peptidoglycan biosynthesis. Functionally, cell wall formation. This chain is UDP-N-acetylmuramate--L-alanine ligase, found in Desulfosudis oleivorans (strain DSM 6200 / JCM 39069 / Hxd3) (Desulfococcus oleovorans).